Consider the following 77-residue polypeptide: Acyl carrier protein (77 aa).

A Carrier domain is found at 1-76 (MDREQRIKEI…DVINYLNEKL (76 aa)). O-(pantetheine 4'-phosphoryl)serine is present on S36.

This sequence belongs to the acyl carrier protein (ACP) family. In terms of processing, 4'-phosphopantetheine is transferred from CoA to a specific serine of apo-ACP by AcpS. This modification is essential for activity because fatty acids are bound in thioester linkage to the sulfhydryl of the prosthetic group.

Its subcellular location is the cytoplasm. It functions in the pathway lipid metabolism; fatty acid biosynthesis. Carrier of the growing fatty acid chain in fatty acid biosynthesis. In Hydrogenobaculum sp. (strain Y04AAS1), this protein is Acyl carrier protein.